A 476-amino-acid polypeptide reads, in one-letter code: Zinc metalloproteinase/disintegrin (476 aa).

The first 20 residues, 1–20 (MIQVLLVIICLADFPYQGTS), serve as a signal peptide directing secretion. The propeptide occupies 21–184 (IILESGNVND…KSDEPIKASQ (164 aa)). Residue Q185 is modified to Pyrrolidone carboxylic acid. Positions 191-387 (RYIELVVVAD…RNPQCILNEP (197 aa)) constitute a Peptidase M12B domain. Ca(2+) contacts are provided by E194 and D278. Intrachain disulfides connect C302–C382, C342–C366, and C344–C349. H327 provides a ligand contact to Zn(2+). E328 is a catalytic residue. Positions 331 and 337 each coordinate Zn(2+). Ca(2+) is bound by residues C382 and N385. Positions 388 to 403 (LRTDTVSTPVSGNELL) are excised as a propeptide. Residues 395–476 (TPVSGNELLE…AGCPRNGFYG (82 aa)) form the Disintegrin domain. 6 cysteine pairs are disulfide-bonded: C409–C424, C411–C419, C418–C441, C432–C438, C437–C462, and C450–C469. A Cell attachment site motif is present at residues 454–456 (KGD).

Belongs to the venom metalloproteinase (M12B) family. P-II subfamily. P-IId sub-subfamily. As to quaternary structure, homodimer; disulfide-linked (disintegrin). Requires Zn(2+) as cofactor. As to expression, expressed by the venom gland.

It is found in the secreted. With respect to regulation, the metalloproteinase is inhibited by EDTA, o-phenanthroline, and cysteine. Glutathione does not inhibit the enzymatic activity. Shows weak degradation of alpha-fibrinogen, but has no activity on beta- and gamma-chains. Digests luteinizing hormone-releasing hormone (LH-RH) and oxidized insulin at X-Leu, X-Phe, and X-Val bonds as well as X-His bond. Does not show fibrinogen-clotting activity. Does not show hemorrhagic activity. Functionally, inhibits ADP-induced platelet aggregation. The polypeptide is Zinc metalloproteinase/disintegrin (Gloydius brevicauda (Korean slamosa snake)).